We begin with the raw amino-acid sequence, 280 residues long: Purine nucleoside phosphorylase (280 aa).

Phosphate is bound by residues serine 15 and 55-56; that span reads RH. Methionine 194 lines the substrate pocket. Threonine 195 is a phosphate binding site. 218–220 provides a ligand contact to substrate; sequence DLD.

It belongs to the PNP/MTAP phosphorylase family. MTAP subfamily. Homohexamer. Dimer of a homotrimer.

It carries out the reaction a purine D-ribonucleoside + phosphate = a purine nucleobase + alpha-D-ribose 1-phosphate. The protein operates within purine metabolism; purine nucleoside salvage. Purine nucleoside phosphorylase involved in purine salvage. The polypeptide is Purine nucleoside phosphorylase (Streptomyces coelicolor (strain ATCC BAA-471 / A3(2) / M145)).